Consider the following 88-residue polypeptide: MEVTDVRIRKVLDGGKMKAIVSVTLDDAFVVHDIKIVEGQNGLFVAMPSRRTPNGEFRDIAHPINASARARIQNAVLEAYEHRDAAEF.

It belongs to the SpoVG family.

Functionally, could be involved in septation. The polypeptide is Putative septation protein SpoVG (Desulforudis audaxviator (strain MP104C)).